The chain runs to 344 residues: MIKILGIESSCDDTAVSIITENREILSNIIISQNTEHAVFGGVVPEIAARSHLSHLDKALKNVLKESNTKLTDISTIAATSGPGLIGGVIVGSMFARSLSSALKKPFIAINHLEGHALTARLTDNIPYPYLLLLASGGHCQFVAVLGLGKYKILGSTIDDAVGEAFDKVAKMLNLAFPGGPEIEKRAKLGDPHKYKFPKPIINSGNCNMSFSGLKTAVRTLIINLKEINDTVINDIAASFQFTIGEILSSKVQDAIRAYEQITNNFDKKNIVIAGGVAANKYLQKILSSCAKTYGYRLIYPPIHLCTDNAAMIAYAGLERYNNKLFTPLNFCPKARWSLEDISN.

Residues H112 and H116 each contribute to the Fe cation site. Residues L134–G138, D167, G180, and N280 each bind substrate. D308 provides a ligand contact to Fe cation.

The protein belongs to the KAE1 / TsaD family. Fe(2+) serves as cofactor.

It is found in the cytoplasm. The catalysed reaction is L-threonylcarbamoyladenylate + adenosine(37) in tRNA = N(6)-L-threonylcarbamoyladenosine(37) in tRNA + AMP + H(+). Required for the formation of a threonylcarbamoyl group on adenosine at position 37 (t(6)A37) in tRNAs that read codons beginning with adenine. Is involved in the transfer of the threonylcarbamoyl moiety of threonylcarbamoyl-AMP (TC-AMP) to the N6 group of A37, together with TsaE and TsaB. TsaD likely plays a direct catalytic role in this reaction. This chain is tRNA N6-adenosine threonylcarbamoyltransferase, found in Rickettsia peacockii (strain Rustic).